A 207-amino-acid chain; its full sequence is Thymidylate kinase (207 aa).

ATP is bound at residue G7–S14.

The protein belongs to the thymidylate kinase family.

It catalyses the reaction dTMP + ATP = dTDP + ADP. Functionally, phosphorylation of dTMP to form dTDP in both de novo and salvage pathways of dTTP synthesis. In Chlamydia felis (strain Fe/C-56) (Chlamydophila felis), this protein is Thymidylate kinase.